The chain runs to 239 residues: Tumor necrosis factor ligand superfamily member 8 (239 aa).

The segment at 1–36 (MEPGLQQAGSCGAPSPDPAMQVQPGSVASPWRSTRP) is disordered. Residues 1 to 43 (MEPGLQQAGSCGAPSPDPAMQVQPGSVASPWRSTRPWRSTSRS) are Cytoplasmic-facing. A helical; Signal-anchor for type II membrane protein membrane pass occupies residues 44–67 (YFYLSTTALVCLVVAVAIILVLVV). Topologically, residues 68 to 239 (QKKDSTPNTT…LSVFLYSSSD (172 aa)) are extracellular. N75, N86, N114, N158, N194, and N206 each carry an N-linked (GlcNAc...) asparagine glycan. Residues 103–230 (SWAYLQVSKH…TNTFPLDNVL (128 aa)) enclose the THD domain. C156 and C182 are disulfide-bonded.

This sequence belongs to the tumor necrosis factor family. As to quaternary structure, homotrimer.

It localises to the membrane. Functionally, cytokine that binds to TNFRSF8/CD30. Induces proliferation of T-cells. This chain is Tumor necrosis factor ligand superfamily member 8 (Tnfsf8), found in Mus musculus (Mouse).